Reading from the N-terminus, the 169-residue chain is Ureidoglycolate lyase (169 aa).

Belongs to the ureidoglycolate lyase family. Homodimer. Ni(2+) serves as cofactor.

The catalysed reaction is (S)-ureidoglycolate = urea + glyoxylate. The protein operates within nitrogen metabolism; (S)-allantoin degradation. Catalyzes the catabolism of the allantoin degradation intermediate (S)-ureidoglycolate, generating urea and glyoxylate. Involved in the utilization of allantoin as nitrogen source. The polypeptide is Ureidoglycolate lyase (Brucella melitensis biotype 2 (strain ATCC 23457)).